We begin with the raw amino-acid sequence, 147 residues long: Probable inactive ribonuclease-like protein 12 (147 aa).

A signal peptide spans 1–20; the sequence is MIIMVIIFLVLLFWENEVND.

The protein belongs to the pancreatic ribonuclease family.

The protein resides in the secreted. Functionally, does not exhibit any ribonuclease activity. This is Probable inactive ribonuclease-like protein 12 (RNASE12) from Homo sapiens (Human).